A 1235-amino-acid polypeptide reads, in one-letter code: UPF0507 protein DEHA2G04334g (1235 aa).

One can recognise a VPS9 domain in the interval 323–487 (QNDDSDAIKI…LSSSMNDEPQ (165 aa)). Residues 1097 to 1124 (STTEADTTDTTDATDATHASPNLANSTN) are disordered. Residues 1100 to 1115 (EADTTDTTDATDATHA) show a composition bias toward low complexity.

This sequence belongs to the UPF0507 family.

This Debaryomyces hansenii (strain ATCC 36239 / CBS 767 / BCRC 21394 / JCM 1990 / NBRC 0083 / IGC 2968) (Yeast) protein is UPF0507 protein DEHA2G04334g.